Consider the following 634-residue polypeptide: SPARC-like protein 1 (634 aa).

A signal peptide spans 1–16 (MKAVLLLLYALGIAAA). The tract at residues 50 to 335 (ADIEKHPNHK…DDSKHGASDD (286 aa)) is disordered. Basic and acidic residues predominate over residues 51 to 62 (DIEKHPNHKAEK). Phosphoserine is present on residues Ser68, Ser76, and Ser84. The span at 73–83 (HEQSTEQDKTY) shows a compositional bias: basic and acidic residues. Residues 89–99 (LKDEEDGDGDL) are compositionally biased toward acidic residues. Positions 131–144 (TVSTPFVDSDQPAN) are enriched in polar residues. Asn144 carries N-linked (GlcNAc...) asparagine glycosylation. A phosphoserine mark is found at Ser151 and Ser159. Composition is skewed to acidic residues over residues 189 to 198 (EKEEEEDPED) and 205 to 214 (NQEEEKEPPE). Residues 233-258 (QESSQPTQISKTKNDFEQGSQGQEGD) are compositionally biased toward polar residues. Residue Ser259 is modified to Phosphoserine. Basic and acidic residues-rich tracts occupy residues 263-276 (GEDKAAGSKEHLPH) and 292-303 (GNRKDTDEEKAV). A phosphoserine mark is found at Ser333 and Ser340. Positions 360–398 (EETPDESENRSEAGDNQGAKKAESSPNAEPSDEGNSRGH) are disordered. Basic and acidic residues predominate over residues 366–382 (SENRSEAGDNQGAKKAE). Residue Asn368 is glycosylated (N-linked (GlcNAc...) asparagine). 2 positions are modified to phosphoserine: Ser370 and Ser390. One can recognise a Follistatin-like domain in the interval 402–424 (SCMNFQCKRGHTCKTDQHGKPHC). Cystine bridges form between Cys403–Cys414, Cys408–Cys424, Cys426–Cys460, Cys432–Cys453, Cys442–Cys479, Cys485–Cys596, and Cys604–Cys620. Residues 420–481 (GKPHCVCQDP…QLDYFGACKS (62 aa)) enclose the Kazal-like domain. The N-linked (GlcNAc...) asparagine glycan is linked to Asn446. Positions 592–627 (PMEHCITRFFEECDPNKDKHITLKEWGHCFGIKEED) constitute an EF-hand domain. Residues Asp605, Asn607, Asp609, His611, and Glu616 each contribute to the Ca(2+) site.

It belongs to the SPARC family. In terms of tissue distribution, expressed in many types of neurons in the brain.

It is found in the secreted. It localises to the extracellular space. Its subcellular location is the extracellular matrix. The polypeptide is SPARC-like protein 1 (Sparcl1) (Rattus norvegicus (Rat)).